Consider the following 312-residue polypeptide: tRNA uridine(34) hydroxylase (312 aa).

The Rhodanese domain occupies 123–217 (SDPEVLLIDT…YLEEVPQEQS (95 aa)). Residue cysteine 177 is the Cysteine persulfide intermediate of the active site. Residues 282 to 293 (ARERQKQIELAR) show a composition bias toward basic and acidic residues. The disordered stretch occupies residues 282–312 (ARERQKQIELARQRNQPHPLGRDPRQSTLEN).

Belongs to the TrhO family.

The catalysed reaction is uridine(34) in tRNA + AH2 + O2 = 5-hydroxyuridine(34) in tRNA + A + H2O. In terms of biological role, catalyzes oxygen-dependent 5-hydroxyuridine (ho5U) modification at position 34 in tRNAs. The sequence is that of tRNA uridine(34) hydroxylase from Pseudomonas aeruginosa (strain UCBPP-PA14).